A 476-amino-acid chain; its full sequence is MRTMSLNIGTIHFVGIGGIGMSGIAEILHNLGYSVQGTDIADNYNVERLRKMGIRVHIGHAAEALGDARVVVVSSAVKADNPEVQAARAKLVPVVRRAEMLAELMRLKSAIAIGGTHGKTTTTSLIAALLDTARLDPTVINGGIINAYGTNARLGASEWMVVEADESDGSFIKLPSTAVVVTNIDPEHMDHYGTVERLHEAFRTFVENIPFYGFAAMCIDHPEVQALVARVPDRKLVTYGFNHQALVRVEKLSMDITGARYDVVITDRVTGATRTIADIHLPMYGEHNVLNSLAAIAVANELGLPNDVVKTALGGFKGVKRRFTRTGEAKGVTVIDDYGHHPVEIAAVLKAARSACQGNVIAVVQPHRYSRLSSLFAEFCTCFNDADMVIVADVYAAGEKPMEGFDKAALVKGLQEHGHRRVMALADSKALAPLVNSLAGPGDMVVCLGAGNITSWAHALPADLAALPDPSPGGAE.

115–121 serves as a coordination point for ATP; that stretch reads GTHGKTT.

Belongs to the MurCDEF family.

The protein resides in the cytoplasm. The enzyme catalyses UDP-N-acetyl-alpha-D-muramate + L-alanine + ATP = UDP-N-acetyl-alpha-D-muramoyl-L-alanine + ADP + phosphate + H(+). It participates in cell wall biogenesis; peptidoglycan biosynthesis. In terms of biological role, cell wall formation. This chain is UDP-N-acetylmuramate--L-alanine ligase, found in Paramagnetospirillum magneticum (strain ATCC 700264 / AMB-1) (Magnetospirillum magneticum).